A 431-amino-acid chain; its full sequence is MSYHELQHFTLLMTQIGFPRPISIDTFRKPDFFLVAEILHYITTVVAPSNAIAMDIATQEDRVYFITTVVNVLQTTLHLKLDSKKIYAAGPEAVRELRKIVQEVATYIGAAATSTDKGTSSAASVDLTLHSNALCVASSKIVEASTKLLTQLRLHVDDLYQRMQQAMSSQPDAASLSAAVQQRIKNLAAECNTLQEEVTTNKREKAKLEEQITQKKQSITHTMDRLDAIRSTKPPFLAELEALEADLSKLHLEYARKFRSLLFLEGQLRANDVREQQRVIEREKNLRALQENALKEELNNMYGGVDARSSTSHLDDEFVETPMPHVMDMHQPKPVQDFVPSKAAPINTNAEIPDDESYSYSYEEEEEEEQVISSANPMQQARAPETHSNGEKHRGLDELSHKSNENADNEEYSYEYSDIGGEELDPDNIEF.

Residues 177 to 218 (SAAVQQRIKNLAAECNTLQEEVTTNKREKAKLEEQITQKKQS) are a coiled coil. Residues 346–431 (INTNAEIPDD…EELDPDNIEF (86 aa)) are disordered. Positions 352-370 (IPDDESYSYSYEEEEEEEQ) are enriched in acidic residues. Basic and acidic residues predominate over residues 384-405 (PETHSNGEKHRGLDELSHKSNE). Over residues 420 to 431 (GGEELDPDNIEF) the composition is skewed to acidic residues.

This sequence belongs to the CLUAP1 family.

Its subcellular location is the cell projection. The protein resides in the cilium. The protein localises to the flagellum. It localises to the cytoplasm. It is found in the cytoskeleton. Its subcellular location is the flagellum axoneme. The protein resides in the flagellum basal body. Functionally, component of the intraflagellar transport complex B (IFT-B) involved in flagellar assembly. This Giardia intestinalis (strain ATCC 50803 / WB clone C6) (Giardia lamblia) protein is Intraflagellar transport protein 38.